We begin with the raw amino-acid sequence, 215 residues long: MPTSIQFQRSSTAAEAANATVRNYPHHHQKQVQKVSLTRGMADVPEHVELSHTHVVGPSQCFSVVVQDVEAPVSTVWSILSRFEHPQAYKHFVKSCHVVIGDGREVGSVREVRVVSGLPAAFSLERLEIMDDDRHVISFSVVGGDHRLMNYKSVTTVHESEEDSDGKKRTRVVESYVVDVPAGNDKEETCSFADTIVRCNLQSLAKLAENTSKFS.

The interval 54-209 is START-like; it reads HVVGPSQCFS…NLQSLAKLAE (156 aa). An intrachain disulfide couples C61 to C190. Abscisate contacts are provided by residues K90, 120-125, 147-153, and E174; these read AAFSLE and RLMNYKS. A Gate loop motif is present at residues 116 to 120; that stretch reads SGLPA. A Latch loop motif is present at residues 146-148; sequence HRL.

Belongs to the PYR/PYL/RCAR abscisic acid intracellular receptor family. In terms of assembly, monomer. Homodimer. Binds ABA on one subunit only. Interacts with HAB1, ABI1 and ABI2, and possibly with other PP2Cs. Binds to CARs protein in an ABA-independent manner, both at the plasma membrane and in the nucleus. Interacts directly with CAR1 and CAR4. Interacts with MYC2 in the nucleus. Interaction with MYC2 is increased in the presence of abscisic acid.

The protein localises to the cytoplasm. It localises to the nucleus. It is found in the cell membrane. Receptor for abscisic acid (ABA) required for ABA-mediated responses such as stomatal closure and germination inhibition. Inhibits the activity of group-A protein phosphatases type 2C (PP2Cs) in an ABA-independent manner but more efficiently when activated by ABA. Can be activated by both (-)-ABA and (+)-ABA. May link ABA and jasmonate signaling pathways by modifying MYC2 transcriptional activity, and regulation of JAZ6 and JAZ8 gene expression by MYC2. This Arabidopsis thaliana (Mouse-ear cress) protein is Abscisic acid receptor PYL6 (PYL6).